Reading from the N-terminus, the 295-residue chain is Alpha-ketoglutarate-dependent sulfate ester dioxygenase (295 aa).

Substrate is bound at residue His71. 2 residues coordinate Fe cation: His98 and Asp100. Val101 contributes to the substrate binding site. Thr125 provides a ligand contact to 2-oxoglutarate. Position 252 (His252) interacts with Fe cation. Residues Arg263 and Arg267 each coordinate 2-oxoglutarate.

Belongs to the TfdA dioxygenase family. Fe(2+) serves as cofactor.

The catalysed reaction is a primary linear alkyl sulfate ester + 2-oxoglutarate + O2 = an aldehyde + sulfate + succinate + CO2 + H(+). It carries out the reaction 2-ethylhexyl sulfate + 2-oxoglutarate + O2 = 2-ethylhexanal + sulfate + succinate + CO2 + H(+). The enzyme catalyses hexyl sulfate + 2-oxoglutarate + O2 = hexanal + sulfate + succinate + CO2 + H(+). It catalyses the reaction pentyl sulfate + 2-oxoglutarate + O2 = pentanal + sulfate + succinate + CO2 + H(+). The catalysed reaction is heptyl sulfate + 2-oxoglutarate + O2 = heptanal + sulfate + succinate + CO2 + H(+). Its function is as follows. Alpha-ketoglutarate-dependent sulfate ester dioxygenase, which oxidizes medium-chain alkyl-sulfate esters. Shows preference for 2-ethylhexyl sulfate (2-EHS) in vitro, leading to the formation of succinate and 2-ethylhexanal. Has likely a role in sulfate scavenging in vivo. In terms of biological role, also causes the inactivation of the 2-carboxyquinoxaline Ty38c (an antitubercular compound that inhibits DprE1) via oxidative decarboxylation, using Ty38c instead of alpha-ketoglutarate as a substrate. Is thus responsible for primary resistance of M.tuberculosis to Ty38c in vitro. Overexpression of Rv3406 causes resistance to Ty38c. This chain is Alpha-ketoglutarate-dependent sulfate ester dioxygenase, found in Mycobacterium tuberculosis (strain ATCC 25618 / H37Rv).